Consider the following 695-residue polypeptide: uncharacterized protein (695 aa).

Serine 113 carries the post-translational modification Phosphoserine. 12 consecutive transmembrane segments (helical) span residues 237–257 (FPLIFTFLLEQIFPMVCSLTV), 265–285 (LAAVSLASMTSNITLAIFEGI), 313–333 (IAFSLVIYIPFAVMWWYSEPL), 344–364 (INLTSRFLRVLILGAPAYIFF), 380–400 (GIYVLTICAPLNVLVSYTLVW), 408–428 (FIGAAIAVVLNFWLMFFLLLF), 457–477 (AFSGIIMLEAEELSYELLTLF), 488–508 (AQSAVSTMAALLYMIPFAIGI), 531–551 (QVGLSFSFIAGFINCCILVFG), 565–585 (VIKLIAQVLPLVGIVQNFDSL), 604–624 (IVNLMAYYLFGIPLALILSWF), and 633–653 (WIGIGSAMLLIGLVEAYYVLF). The span at 673 to 688 (EVDSDEYLTDSDDPDE) shows a compositional bias: acidic residues. Positions 673-695 (EVDSDEYLTDSDDPDENTALLGA) are disordered.

Belongs to the multi antimicrobial extrusion (MATE) (TC 2.A.66.1) family.

It is found in the membrane. This is an uncharacterized protein from Saccharomyces cerevisiae (strain ATCC 204508 / S288c) (Baker's yeast).